We begin with the raw amino-acid sequence, 435 residues long: Probable long-chain-alcohol O-fatty-acyltransferase 11 (435 aa).

The next 11 helical transmembrane spans lie at 7–27 (NLIK…YVPT), 36–56 (FLSV…FASV), 59–79 (SGYT…LFSF), 120–140 (PIEV…SVVL), 149–169 (IYPI…LEIL), 200–220 (DFWG…DVYA), 238–258 (LGVF…FFYI), 263–283 (PTGE…AYDA), 300–320 (CLIL…WLFF), 363–383 (FFTG…IGFV), and 406–426 (FFIG…IGFV).

It belongs to the wax synthase family.

It localises to the membrane. The catalysed reaction is a long chain fatty alcohol + a fatty acyl-CoA = a wax ester + CoA. Its function is as follows. Catalyzes the final step in the synthesis of long-chain linear esters (waxes). In Arabidopsis thaliana (Mouse-ear cress), this protein is Probable long-chain-alcohol O-fatty-acyltransferase 11.